The primary structure comprises 163 residues: MRKQVAIFTDGSCLGNPGPGGYGAILRYKQHEKTFSAGYRLTTNNRMELMAAIVALEALTDACEVVLSTDSQYVRQGITQWIHNWKKRGWKTAYKKPVKNVDLWQRLDAAIQPHTLRWDWVKGHSGHPENERCDELARTAACHPALEDIGYRVEAQTSGGRAD.

The 142-residue stretch at 1-142 (MRKQVAIFTD…CDELARTAAC (142 aa)) folds into the RNase H type-1 domain. Mg(2+)-binding residues include Asp10, Glu48, Asp70, and Asp134.

Belongs to the RNase H family. As to quaternary structure, monomer. Mg(2+) is required as a cofactor.

The protein localises to the cytoplasm. The enzyme catalyses Endonucleolytic cleavage to 5'-phosphomonoester.. Its function is as follows. Endonuclease that specifically degrades the RNA of RNA-DNA hybrids. This is Ribonuclease H from Sodalis glossinidius (strain morsitans).